The chain runs to 348 residues: Holliday junction branch migration complex subunit RuvB (348 aa).

The large ATPase domain (RuvB-L) stretch occupies residues 1-183 (MTEASRIVAP…FGIPVRLNFY (183 aa)). Residues Leu22, Arg23, Gly64, Lys67, Thr68, Thr69, 130 to 132 (EDF), Arg173, Tyr183, and Arg220 contribute to the ATP site. Thr68 is a binding site for Mg(2+). The small ATPAse domain (RuvB-S) stretch occupies residues 184–254 (TEDELEKIVS…VADHALGALE (71 aa)). Positions 257-348 (AAGLDAMDRR…SGLFGQDEDR (92 aa)) are head domain (RuvB-H). The DNA site is built by Arg293, Arg312, and Arg317. Residues 329–348 (LTEPSRDPAQSGLFGQDEDR) form a disordered region.

This sequence belongs to the RuvB family. As to quaternary structure, homohexamer. Forms an RuvA(8)-RuvB(12)-Holliday junction (HJ) complex. HJ DNA is sandwiched between 2 RuvA tetramers; dsDNA enters through RuvA and exits via RuvB. An RuvB hexamer assembles on each DNA strand where it exits the tetramer. Each RuvB hexamer is contacted by two RuvA subunits (via domain III) on 2 adjacent RuvB subunits; this complex drives branch migration. In the full resolvosome a probable DNA-RuvA(4)-RuvB(12)-RuvC(2) complex forms which resolves the HJ.

The protein localises to the cytoplasm. The catalysed reaction is ATP + H2O = ADP + phosphate + H(+). The RuvA-RuvB-RuvC complex processes Holliday junction (HJ) DNA during genetic recombination and DNA repair, while the RuvA-RuvB complex plays an important role in the rescue of blocked DNA replication forks via replication fork reversal (RFR). RuvA specifically binds to HJ cruciform DNA, conferring on it an open structure. The RuvB hexamer acts as an ATP-dependent pump, pulling dsDNA into and through the RuvAB complex. RuvB forms 2 homohexamers on either side of HJ DNA bound by 1 or 2 RuvA tetramers; 4 subunits per hexamer contact DNA at a time. Coordinated motions by a converter formed by DNA-disengaged RuvB subunits stimulates ATP hydrolysis and nucleotide exchange. Immobilization of the converter enables RuvB to convert the ATP-contained energy into a lever motion, pulling 2 nucleotides of DNA out of the RuvA tetramer per ATP hydrolyzed, thus driving DNA branch migration. The RuvB motors rotate together with the DNA substrate, which together with the progressing nucleotide cycle form the mechanistic basis for DNA recombination by continuous HJ branch migration. Branch migration allows RuvC to scan DNA until it finds its consensus sequence, where it cleaves and resolves cruciform DNA. The sequence is that of Holliday junction branch migration complex subunit RuvB from Nitrobacter winogradskyi (strain ATCC 25391 / DSM 10237 / CIP 104748 / NCIMB 11846 / Nb-255).